Consider the following 785-residue polypeptide: Protein SEY1 (785 aa).

The segment at 1 to 31 (MASAAPINLRAQDTPYVPPTSLPTSSSQTGS) is disordered. Residues 1 to 689 (MASAAPINLR…KRSTVASIAQ (689 aa)) lie on the Cytoplasmic side of the membrane. Low complexity predominate over residues 22–31 (LPTSSSQTGS). Positions 61–281 (GFSYNIVAVF…SSDYLFKPAY (221 aa)) constitute a GB1/RHD3-type G domain. 71–78 (GSQSTGKS) serves as a coordination point for GTP. Residues 458-482 (SWEEELELLRDEIRAVADQCRKDET) are a coiled coil. A helical membrane pass occupies residues 690 to 710 (IPYWIYGVLVVLGWNEAMLVL). Over 711-713 (FNP) the chain is Lumenal. The helical transmembrane segment at 714–734 (LYFAFLLLAMATSYIIAQLGL) threads the bilayer. The Cytoplasmic portion of the chain corresponds to 735-785 (VGPLFQVTRTVGSEIQRQATARLREHFSQPVLAEPVQVGPSRDREEVGQIQ).

The protein belongs to the TRAFAC class dynamin-like GTPase superfamily. GB1/RHD3 GTPase family. RHD3 subfamily.

Its subcellular location is the endoplasmic reticulum membrane. Functionally, cooperates with the reticulon proteins and tubule-shaping DP1 family proteins to generate and maintain the structure of the tubular endoplasmic reticulum network. Has GTPase activity, which is required for its function in ER organization. This chain is Protein SEY1, found in Laccaria bicolor (strain S238N-H82 / ATCC MYA-4686) (Bicoloured deceiver).